The primary structure comprises 156 residues: Ribosome maturation factor RimP (156 aa).

It belongs to the RimP family.

The protein localises to the cytoplasm. In terms of biological role, required for maturation of 30S ribosomal subunits. This chain is Ribosome maturation factor RimP, found in Lysinibacillus sphaericus (strain C3-41).